A 1287-amino-acid chain; its full sequence is Pullulanase A (1287 aa).

An N-terminal signal peptide occupies residues 1-44; sequence MRKTPSHTEKKMVYSIRSLKNGTGSVLIGASLVLLAMATPTISS. A disordered region spans residues 42 to 139; it reads ISSDESTPTT…VTTETKAEEP (98 aa). Over residues 48–61 the composition is skewed to low complexity; that stretch reads TPTTNEPNNRNTTT. Positions 79 to 90 are enriched in polar residues; it reads DISSPGNANASL. Composition is skewed to low complexity over residues 99-113 and 122-133; these read TEPT…DPAP and EPTTSTSPVTTE. Substrate contacts are provided by residues 163–165, tryptophan 175, aspartate 221, 270–272, tryptophan 283, lysine 325, and asparagine 330; these read WTW and WYW. 2 residues coordinate Ca(2+): serine 668 and tyrosine 670. Substrate is bound by residues 674–675 and phenylalanine 750; that span reads YD. Aspartate 785 functions as the Nucleophile in the catalytic mechanism. Glutamate 814 acts as the Proton donor in catalysis. Position 816 (tryptophan 816) interacts with substrate. Ca(2+) contacts are provided by methionine 835, threonine 838, and aspartate 839. Positions 846, 849, and 856 each coordinate substrate. Ca(2+) is bound by residues aspartate 889 and aspartate 893. Substrate contacts are provided by residues asparagine 903, lysine 976, and 996–998; that span reads DSY. Aspartate 999 serves as a coordination point for Ca(2+). Residues 1147–1255 form a disordered region; the sequence is VSQNGTSHES…TPDRQAELPN (109 aa). Basic and acidic residues predominate over residues 1156–1203; that stretch reads STAEEKPDSTPSKPEHQNEASHPAHQDPAPEARPDSTKPDAKVADAEN. Positions 1212-1225 are enriched in low complexity; sequence SQAEQPAQEAQASS. Residues 1228 to 1239 show a composition bias toward basic and acidic residues; sequence EAVRKESVENSS. An LPXTG sorting signal motif is present at residues 1253 to 1257; sequence LPNTG. Threonine 1256 is modified (pentaglycyl murein peptidoglycan amidated threonine). Residues 1257–1287 constitute a propeptide, removed by sortase; that stretch reads GIKNENKLLFAGISLLALLGLGFLLKNKKEN.

Belongs to the glycosyl hydrolase 13 family.

It is found in the secreted. Its subcellular location is the cell wall. It localises to the cell surface. It carries out the reaction Hydrolysis of (1-&gt;6)-alpha-D-glucosidic linkages in pullulan, amylopectin and glycogen, and in the alpha- and beta-limit dextrins of amylopectin and glycogen.. Inhibited by 4-O-alpha-D-glucopyranosylmoranoline (G1M). In terms of biological role, virulence factor. Involved in the degradation of glycogen of the mammalian host cells. Hydrolyzes the alpha-1,6-branchpoints of glycogen. Hydrolyzes pullulan. Does not hydrolyze dextran. Binds to mouse lung alveolar type II cells that are rich in glycogen stores. Is an alpha-glucan-specific carbohydrate-binding protein, which binds to amylose (pure alpha-(1,4)-linked glucose), amylopectin (alpha-(1,4)-linked glucose with alpha-(1,6) branch points), pullulan (linear polymer of mixed alpha-(1,4)- and alpha-(1,6)-linked glucose) and glycogen (similar to amylopectin with more frequent alpha-(1,6) branch points) in vitro. Does not bind to dextran (a linear polymer of alpha-(1,6)-linked glucose). This Streptococcus pneumoniae protein is Pullulanase A.